Consider the following 119-residue polypeptide: Ribonuclease P protein component (119 aa).

The protein belongs to the RnpA family. As to quaternary structure, consists of a catalytic RNA component (M1 or rnpB) and a protein subunit.

The catalysed reaction is Endonucleolytic cleavage of RNA, removing 5'-extranucleotides from tRNA precursor.. RNaseP catalyzes the removal of the 5'-leader sequence from pre-tRNA to produce the mature 5'-terminus. It can also cleave other RNA substrates such as 4.5S RNA. The protein component plays an auxiliary but essential role in vivo by binding to the 5'-leader sequence and broadening the substrate specificity of the ribozyme. The sequence is that of Ribonuclease P protein component from Escherichia fergusonii (strain ATCC 35469 / DSM 13698 / CCUG 18766 / IAM 14443 / JCM 21226 / LMG 7866 / NBRC 102419 / NCTC 12128 / CDC 0568-73).